A 61-amino-acid chain; its full sequence is Small ribosomal subunit protein uS14 (61 aa).

Positions 24, 27, 40, and 43 each coordinate Zn(2+).

This sequence belongs to the universal ribosomal protein uS14 family. Zinc-binding uS14 subfamily. Part of the 30S ribosomal subunit. Contacts proteins S3 and S10. Requires Zn(2+) as cofactor.

Functionally, binds 16S rRNA, required for the assembly of 30S particles and may also be responsible for determining the conformation of the 16S rRNA at the A site. The protein is Small ribosomal subunit protein uS14 of Caldicellulosiruptor bescii (strain ATCC BAA-1888 / DSM 6725 / KCTC 15123 / Z-1320) (Anaerocellum thermophilum).